We begin with the raw amino-acid sequence, 308 residues long: D-alanine--D-alanine ligase (308 aa).

Positions 106-305 (KMLWKAFGLP…FEQLVVKILE (200 aa)) constitute an ATP-grasp domain. Residue 136 to 191 (VEKLGLPLMVKPSLEGSSVGLTKVNAIDDLKSAVEFALQYDETVLIEEWLSGDELT) participates in ATP binding. Mg(2+) contacts are provided by aspartate 259, glutamate 272, and asparagine 274.

This sequence belongs to the D-alanine--D-alanine ligase family. It depends on Mg(2+) as a cofactor. Mn(2+) is required as a cofactor.

Its subcellular location is the cytoplasm. The enzyme catalyses 2 D-alanine + ATP = D-alanyl-D-alanine + ADP + phosphate + H(+). Its pathway is cell wall biogenesis; peptidoglycan biosynthesis. Functionally, cell wall formation. The sequence is that of D-alanine--D-alanine ligase from Histophilus somni (strain 2336) (Haemophilus somnus).